A 636-amino-acid chain; its full sequence is Outer spore wall assembly protein SHE10 (636 aa).

The first 23 residues, 1–23 (MRLVSKLLKALLVLLLAFGSVRY), serve as a signal peptide directing secretion. Coiled coils occupy residues 433–460 (RAHLRKLADEVNDHVEVLRQENVELFEE) and 551–584 (KANLEFQAREALERQQREKEKAESASMKASTEFE). The interval 565–607 (QQREKEKAESASMKASTEFELSSSSFSSSSPSTASSCTASSTS) is disordered. Residues 579–607 (ASTEFELSSSSFSSSSPSTASSCTASSTS) are compositionally biased toward low complexity.

This sequence belongs to the SHE10 family. Component of the mitochondria-localized RNase mitochondrial RNA-processing (RNase MRP) composed of one single RNA encoded by the NME1 gene and at least 31 proteins. Absent in the nucleus-localized RNase MRP (NuMRP).

The protein localises to the mitochondrion. Its function is as follows. Involved in spore wall assembly. May be a component of the mitochondrial RNase MRP (MtMRP), a ribonucleoprotein endoribonuclease involved in the cleaving RNA transcripts to generate primers for DNA replication in mitochondria. This Kluyveromyces lactis (strain ATCC 8585 / CBS 2359 / DSM 70799 / NBRC 1267 / NRRL Y-1140 / WM37) (Yeast) protein is Outer spore wall assembly protein SHE10.